The sequence spans 237 residues: Ribosomal RNA small subunit methyltransferase G (237 aa).

S-adenosyl-L-methionine is bound by residues glycine 78, phenylalanine 83, 129–130, and arginine 148; that span reads AE.

This sequence belongs to the methyltransferase superfamily. RNA methyltransferase RsmG family.

The protein localises to the cytoplasm. Its function is as follows. Specifically methylates the N7 position of a guanine in 16S rRNA. The chain is Ribosomal RNA small subunit methyltransferase G from Streptococcus pyogenes serotype M12 (strain MGAS2096).